We begin with the raw amino-acid sequence, 194 residues long: Imidazoleglycerol-phosphate dehydratase (194 aa).

This sequence belongs to the imidazoleglycerol-phosphate dehydratase family.

The protein resides in the cytoplasm. It carries out the reaction D-erythro-1-(imidazol-4-yl)glycerol 3-phosphate = 3-(imidazol-4-yl)-2-oxopropyl phosphate + H2O. It functions in the pathway amino-acid biosynthesis; L-histidine biosynthesis; L-histidine from 5-phospho-alpha-D-ribose 1-diphosphate: step 6/9. The protein is Imidazoleglycerol-phosphate dehydratase of Listeria welshimeri serovar 6b (strain ATCC 35897 / DSM 20650 / CCUG 15529 / CIP 8149 / NCTC 11857 / SLCC 5334 / V8).